Here is a 515-residue protein sequence, read N- to C-terminus: Probable multifunctional siroheme biosynthesis protein HemA (515 aa).

Residues 26-27 and 47-48 contribute to the NAD(+) site; these read SL and IR. The interval 26–174 is glutamyl-tRNA reductase; that stretch reads SLDYKSAAID…TAAKKAKTEI (149 aa). L-glutamyl-tRNA(Glu) contacts are provided by residues 68-71, Ser127, Glu132, and Gln138; that span reads TCNR. Residue Cys69 is the Nucleophile of the active site. Residue 206-211 coordinates NADP(+); that stretch reads GNGEIG. The tract at residues 367 to 507 is precorrin-2 dehydrogenase /sirohydrochlorin ferrochelatase; the sequence is FPLFIDLSGK…SLVKSVAEQI (141 aa).

It in the N-terminal section; belongs to the glutamyl-tRNA reductase family. This sequence in the C-terminal section; belongs to the precorrin-2 dehydrogenase / sirohydrochlorin ferrochelatase family. As to quaternary structure, homodimer.

It carries out the reaction (S)-4-amino-5-oxopentanoate + tRNA(Glu) + NADP(+) = L-glutamyl-tRNA(Glu) + NADPH + H(+). The enzyme catalyses precorrin-2 + NAD(+) = sirohydrochlorin + NADH + 2 H(+). It catalyses the reaction siroheme + 2 H(+) = sirohydrochlorin + Fe(2+). The protein operates within cofactor biosynthesis; adenosylcobalamin biosynthesis; sirohydrochlorin from precorrin-2: step 1/1. It participates in porphyrin-containing compound metabolism; siroheme biosynthesis; siroheme from sirohydrochlorin: step 1/1. It functions in the pathway porphyrin-containing compound metabolism; siroheme biosynthesis; sirohydrochlorin from precorrin-2: step 1/1. Its pathway is porphyrin-containing compound metabolism; protoporphyrin-IX biosynthesis; 5-aminolevulinate from L-glutamyl-tRNA(Glu): step 1/2. Its function is as follows. Multifunctional enzyme that catalyzes the NADPH-dependent reduction of glutamyl-tRNA(Glu) to glutamate 1-semialdehyde (GSA), the NAD-dependent ring dehydrogenation of precorrin-2 to sirohydrochlorin and finally, the ferrochelation of sirohydrochlorin to yield siroheme. This Ruminiclostridium josui (Clostridium josui) protein is Probable multifunctional siroheme biosynthesis protein HemA.